The following is a 536-amino-acid chain: CTP synthase (536 aa).

The amidoligase domain stretch occupies residues 1 to 267 (MSKFVFVTGG…CKETLKYLDL (267 aa)). Ser13 contributes to the CTP binding site. Residue Ser13 participates in UTP binding. ATP contacts are provided by residues 14-19 (SIGKGI) and Asp71. Residues Asp71 and Glu141 each contribute to the Mg(2+) site. Residues 148–150 (DIE), 188–193 (KTKPTQ), and Lys224 each bind CTP. UTP contacts are provided by residues 188–193 (KTKPTQ) and Lys224. The region spanning 292–534 (KVALVGKYIE…IKASQDKLTQ (243 aa)) is the Glutamine amidotransferase type-1 domain. Gly354 contacts L-glutamine. Cys381 functions as the Nucleophile; for glutamine hydrolysis in the catalytic mechanism. L-glutamine contacts are provided by residues 382-385 (LGMQ), Glu405, and Arg462. Active-site residues include His507 and Glu509.

It belongs to the CTP synthase family. In terms of assembly, homotetramer.

The enzyme catalyses UTP + L-glutamine + ATP + H2O = CTP + L-glutamate + ADP + phosphate + 2 H(+). It carries out the reaction L-glutamine + H2O = L-glutamate + NH4(+). It catalyses the reaction UTP + NH4(+) + ATP = CTP + ADP + phosphate + 2 H(+). It participates in pyrimidine metabolism; CTP biosynthesis via de novo pathway; CTP from UDP: step 2/2. Its activity is regulated as follows. Allosterically activated by GTP, when glutamine is the substrate; GTP has no effect on the reaction when ammonia is the substrate. The allosteric effector GTP functions by stabilizing the protein conformation that binds the tetrahedral intermediate(s) formed during glutamine hydrolysis. Inhibited by the product CTP, via allosteric rather than competitive inhibition. Catalyzes the ATP-dependent amination of UTP to CTP with either L-glutamine or ammonia as the source of nitrogen. Regulates intracellular CTP levels through interactions with the four ribonucleotide triphosphates. The chain is CTP synthase from Prochlorococcus marinus (strain AS9601).